The chain runs to 355 residues: MQLSSTKPSSKTREPSTAQDIVTMQNILEKLYRAESISRQESQALFGAIIRGELEASQLAAALISMKVRGEHPDEIAGAATALLADAQPFPRPDYLFADIVGTGGDGTNSINISTASAFVAASCGLKIAKHGNRSVSSRSGSSDLLSAFGIKLDMSAQDSRQALDDLGVCFLFAPQYHLGFRHAMPVRQQLKTRTVFNVLGPLVNPARPPLALIGVYSPELVRPIAETLKVLGYQRAAVVHGGGMDEVAIHAPTQVAELNNGEIETYELTHRDFGLDTYSLSALQGGTPEENRDILASLLQGKGERAHAAAVAANVALLLRLFGQENLRQNAQQALEVIHSGQAYQRVIALSARG.

5-phospho-alpha-D-ribose 1-diphosphate-binding positions include Gly-102, 105-106 (GD), Ser-110, 112-115 (NIST), 130-138 (KHGNRSVSS), and Ser-142. Position 102 (Gly-102) interacts with anthranilate. Ser-114 is a Mg(2+) binding site. Asn-133 is a binding site for anthranilate. Arg-188 contributes to the anthranilate binding site. Mg(2+) contacts are provided by Asp-246 and Glu-247.

The protein belongs to the anthranilate phosphoribosyltransferase family. Homodimer. It depends on Mg(2+) as a cofactor.

The catalysed reaction is N-(5-phospho-beta-D-ribosyl)anthranilate + diphosphate = 5-phospho-alpha-D-ribose 1-diphosphate + anthranilate. The protein operates within amino-acid biosynthesis; L-tryptophan biosynthesis; L-tryptophan from chorismate: step 2/5. Its function is as follows. Catalyzes the transfer of the phosphoribosyl group of 5-phosphorylribose-1-pyrophosphate (PRPP) to anthranilate to yield N-(5'-phosphoribosyl)-anthranilate (PRA). The protein is Anthranilate phosphoribosyltransferase of Pectobacterium carotovorum subsp. carotovorum (strain PC1).